Here is a 205-residue protein sequence, read N- to C-terminus: Recombination protein RecR (205 aa).

The C4-type zinc finger occupies 58–75 (CSLCQNVTDKEIDPCNIC). The Toprim domain maps to 83–182 (RVVCVVEAPN…KVTRIARGIP (100 aa)).

The protein belongs to the RecR family.

In terms of biological role, may play a role in DNA repair. It seems to be involved in an RecBC-independent recombinational process of DNA repair. It may act with RecF and RecO. In Chloroherpeton thalassium (strain ATCC 35110 / GB-78), this protein is Recombination protein RecR.